The primary structure comprises 617 residues: Vacuolar protein sorting-associated protein 33B (617 aa).

Ala2 is modified (N-acetylalanine).

Belongs to the STXBP/unc-18/SEC1 family. In terms of assembly, interacts with RAB11A and VIPAS39. Associates with adapter protein complex 3 (AP-3), clathrin:AP-3 and clathrin:HGS complexes. In terms of processing, phosphorylated on tyrosine residues.

It localises to the late endosome membrane. The protein localises to the lysosome membrane. The protein resides in the early endosome. Its subcellular location is the cytoplasmic vesicle. It is found in the clathrin-coated vesicle. It localises to the recycling endosome. Its function is as follows. May play a role in vesicle-mediated protein trafficking to lysosomal compartments and in membrane docking/fusion reactions of late endosomes/lysosomes. Required for proper trafficking and targeting of the collagen-modifying enzyme lysyl hydroxylase 3 (LH3) to intracellular collagen. Mediates phagolysosomal fusion in macrophages. Proposed to be involved in endosomal maturation implicating in part VIPAS39. In epithelial cells, the VPS33B:VIPAS39 complex may play a role in the apical RAB11A-dependentrecycling pathway and in the maintenance of the apical-basolateral polarity. Seems to be involved in the sorting of specific cargos from the trans-Golgi network to alpha-granule-destined multivesicular bodies (MVBs) promoting MVBs maturation in megakaryocytes. The polypeptide is Vacuolar protein sorting-associated protein 33B (Vps33b) (Mus musculus (Mouse)).